A 175-amino-acid chain; its full sequence is DELTA-stichotoxin-Hcr4a (175 aa).

The tract at residues 1-10 (ALAGAIIAGA) is plays an important role in the hemolytic activity. An N-terminal region region spans residues 9 to 28 (GASLTFQILDKVLAELGQVS). Ser52, Val85, Ser103, Pro105, Tyr131, Tyr135, and Tyr136 together coordinate phosphocholine. A trp-rich region, which is important for the binding to lipid membrane region spans residues 103–118 (SVPFDYNLYSNWWDVK).

The protein belongs to the actinoporin family. Sea anemone subfamily. In terms of assembly, octamer or nonamer in membranes. Monomer in the soluble state.

The protein localises to the secreted. It localises to the nematocyst. Its subcellular location is the target cell membrane. Its function is as follows. Pore-forming protein that forms cations-selective hydrophilic pores of around 1 nm and causes cardiac stimulation and cytolysis. Pore formation is a multi-step process that involves specific recognition of membrane sphingomyelin (but neither cholesterol nor phosphatidylcholine) using aromatic rich region and adjacent phosphocholine (POC) binding site, firm binding to the membrane (mainly driven by hydrophobic interactions) accompanied by the transfer of the N-terminal region to the lipid-water interface and finally pore formation after oligomerization of monomers. The polypeptide is DELTA-stichotoxin-Hcr4a (Radianthus crispa (Leathery sea anemone)).